A 1173-amino-acid chain; its full sequence is MEDNDISFSIFGNSDDILDNTKKSKSNINNSGSSIFGNGNENNNNMNTNNNNSNQNNNDINYNNNNNNNNNNNSNNSNNSNNNNNNINNNNNRNNNNFNNNNNNNVNYFEQDVDFGENAHSSNYGDNNNIFSDESNNYNNNNNNNDYNNNNYYDNNNYNENYNENYNENYNNNNNNNNNNNNNNNNNNNNNNNNNNNNNYYNENNNQQQLQQNYSNNNYNNEYINNFNNNDNSYNNNNNNNNNNSNFNNYNNNNNGYDNSYSNSNNNNYYDNSNNNSKNDNQYNQQQQYYQEEEQQQQQHEEFEKEIEQKEQDSSPINVNRNPNNSVMIKIGEVEVPEDIYNQKVEKWRNDFNSIFRNLETLEIDYTKATFGLPKDTTVRSIFWRIALGTLSKDPTTWVERTNSSRKKYETFKKNYIINPRNSKDQDADLQQQQQQQQQQQRKPVSLIDDPLSQSEDSLWNQFFDNENAQREISHDISRTYPGLGFFERLDIQDIMIRILFIFSKQYPKIKYLQGMNEILAPILYSVYNDSHWFNNRDVFSKKNYDKKNKQYEHFDFVFDQQYQQDYYPDGPIQYPTNSNNFNGAGSSGSGGSVSRKDGGIGAFLRDPQYFEHDSYFIFESLMTIVGKWFTSPPSSPQPPPRVQGQFKKLYDLSERDASDQAVNIVVVDQCLRMFEDLKFIEPQLYSYLKQDLGIEPHLYSLRWIRIILAQVFPLDSLLILWDSIFKESVTEFLPYICLTMLIMIKDQIIEKDYSECLQVLFHYPVTQDMPMLLNTAYSVREKIQMAKQQYNIPISTPVSTPLPTSLSRRSIKAYPVSTSSTIVNQSTTTNSSSSSTTTSTTSANRGLSHSSQSYRSSSGSGSGSISNQNKGNGQSGIFSSFTSTFKQIINDLNEYNEEFQLAKENEQLKQQKSKLQKEVDTLKETQTHVISRLERILFSFVDFKQKHIHDQDNFESVDAMEKEVTSILNEVLNSQTTIANLNNSKNRLPNKSVQQSTISQQSTTPQQSITQQTSSPNIVLKQQQPITVISQQQQSQQQQSLQQEQQQSTQQQQSTQQEQQSTQQEQQQSTQPQQSQQNNDNSPFQQYNNDNRQEKISLEDEVFFDNQFVSVQSTNKEFQLKTLSLPNVEIHEDDLVEVKTHDSTVDEDEDGNPITEQYNYKQQLEARWGFNK.

4 disordered regions span residues Lys22–Glu203, Asn217–Asn324, Asp425–Ser446, and Ile823–Gly872. Composition is skewed to low complexity over residues Ser26–Asn107, Asn127–Glu203, and Asn217–Tyr290. A coiled-coil region spans residues Asn163 to Tyr214. The span at Gln299–Asp313 shows a compositional bias: basic and acidic residues. Polar residues predominate over residues Ser314–Asn324. Residues Pro374–Ser729 enclose the Rab-GAP TBC domain. A compositionally biased stretch (low complexity) spans Gln431–Gln441. A coiled-coil region spans residues Thr885 to Val930. The span at Asn983 to Val994 shows a compositional bias: polar residues. 2 disordered regions span residues Asn983–Ser1015 and Gln1054–Asn1089. Low complexity-rich tracts occupy residues Gln995–Ser1015 and Gln1054–Gln1078. Residues Asn1079–Asn1089 are compositionally biased toward polar residues.

In terms of biological role, may act as a GTPase-activating protein for Rab family protein(s). This chain is TBC1 domain family member 5 homolog A (tbc1d5A), found in Dictyostelium discoideum (Social amoeba).